Consider the following 522-residue polypeptide: Transactivator/viroplasmin protein (522 aa).

The segment covering 111-126 has biased composition (polar residues); sequence QGIQIPQKSEPNSSVA. Disordered regions lie at residues 111–133 and 491–522; these read QGIQ…AESG and SADS…KASG.

It belongs to the caulimoviridae viroplasmin family.

The protein resides in the host cytoplasm. Its function is as follows. Enhances the ribosomal termination-reinitiation event leading to the translation of major open reading frames on the polycistronic viral RNAs. This chain is Transactivator/viroplasmin protein, found in Arabidopsis thaliana (Mouse-ear cress).